The following is a 113-amino-acid chain: Cell cycle protein GpsB (113 aa).

Positions 32 to 70 (LDSVIKDYENFGKEIERMKNENDRLTDKVDELNKQVSAG) form a coiled coil.

It belongs to the GpsB family. As to quaternary structure, forms polymers through the coiled coil domains. Interacts with PBP1, MreC and EzrA.

The protein localises to the cytoplasm. In terms of biological role, divisome component that associates with the complex late in its assembly, after the Z-ring is formed, and is dependent on DivIC and PBP2B for its recruitment to the divisome. Together with EzrA, is a key component of the system that regulates PBP1 localization during cell cycle progression. Its main role could be the removal of PBP1 from the cell pole after pole maturation is completed. Also contributes to the recruitment of PBP1 to the division complex. Not essential for septum formation. This is Cell cycle protein GpsB from Pediococcus pentosaceus (strain ATCC 25745 / CCUG 21536 / LMG 10740 / 183-1w).